A 121-amino-acid chain; its full sequence is Large ribosomal subunit protein bL20 (121 aa).

This sequence belongs to the bacterial ribosomal protein bL20 family.

Binds directly to 23S ribosomal RNA and is necessary for the in vitro assembly process of the 50S ribosomal subunit. It is not involved in the protein synthesizing functions of that subunit. This Wolbachia pipientis subsp. Culex pipiens (strain wPip) protein is Large ribosomal subunit protein bL20.